The following is a 288-amino-acid chain: Polyamine aminopropyltransferase (288 aa).

One can recognise a PABS domain in the interval 9–238 (ETLHDQFGQY…GIMTFAWATD (230 aa)). Q33 contacts S-methyl-5'-thioadenosine. Spermidine is bound by residues H64 and D88. S-methyl-5'-thioadenosine-binding positions include E108 and 140–141 (DG). D158 functions as the Proton acceptor in the catalytic mechanism. 158 to 161 (DCTD) provides a ligand contact to spermidine. P165 serves as a coordination point for S-methyl-5'-thioadenosine.

The protein belongs to the spermidine/spermine synthase family. In terms of assembly, homodimer or homotetramer.

Its subcellular location is the cytoplasm. It catalyses the reaction S-adenosyl 3-(methylsulfanyl)propylamine + putrescine = S-methyl-5'-thioadenosine + spermidine + H(+). Its pathway is amine and polyamine biosynthesis; spermidine biosynthesis; spermidine from putrescine: step 1/1. Catalyzes the irreversible transfer of a propylamine group from the amino donor S-adenosylmethioninamine (decarboxy-AdoMet) to putrescine (1,4-diaminobutane) to yield spermidine. In Shigella boydii serotype 4 (strain Sb227), this protein is Polyamine aminopropyltransferase.